Here is a 694-residue protein sequence, read N- to C-terminus: Elongation factor G (694 aa).

The tr-type G domain occupies 8–287 (EDYRNFGIMA…AVVEFLPAPT (280 aa)). Residues 17-24 (AHIDAGKT), 86-90 (DTPGH), and 140-143 (NKMD) contribute to the GTP site.

Belongs to the TRAFAC class translation factor GTPase superfamily. Classic translation factor GTPase family. EF-G/EF-2 subfamily.

Its subcellular location is the cytoplasm. In terms of biological role, catalyzes the GTP-dependent ribosomal translocation step during translation elongation. During this step, the ribosome changes from the pre-translocational (PRE) to the post-translocational (POST) state as the newly formed A-site-bound peptidyl-tRNA and P-site-bound deacylated tRNA move to the P and E sites, respectively. Catalyzes the coordinated movement of the two tRNA molecules, the mRNA and conformational changes in the ribosome. This chain is Elongation factor G, found in Brucella suis (strain ATCC 23445 / NCTC 10510).